The primary structure comprises 139 residues: D-ribose pyranase (139 aa).

Residue His-20 is the Proton donor of the active site. Substrate-binding positions include Asp-28, His-106, and Phe-128–Asn-130.

This sequence belongs to the RbsD / FucU family. RbsD subfamily. As to quaternary structure, homodecamer.

It localises to the cytoplasm. The catalysed reaction is beta-D-ribopyranose = beta-D-ribofuranose. Its pathway is carbohydrate metabolism; D-ribose degradation; D-ribose 5-phosphate from beta-D-ribopyranose: step 1/2. Catalyzes the interconversion of beta-pyran and beta-furan forms of D-ribose. This is D-ribose pyranase from Klebsiella pneumoniae (strain 342).